The following is a 577-amino-acid chain: Arginine--tRNA ligase (577 aa).

Positions 124 to 132 match the 'HIGH' region motif; the sequence is VAKEMHVGH.

The protein belongs to the class-I aminoacyl-tRNA synthetase family. Monomer.

Its subcellular location is the cytoplasm. It carries out the reaction tRNA(Arg) + L-arginine + ATP = L-arginyl-tRNA(Arg) + AMP + diphosphate. In Salmonella typhi, this protein is Arginine--tRNA ligase.